The following is a 199-amino-acid chain: Cytochrome c oxidase assembly protein CtaG (199 aa).

Over 1-12 (MTNTPQTPPKER) the chain is Cytoplasmic. A helical; Signal-anchor for type II membrane protein transmembrane segment spans residues 13-35 (ANGVIVGACLAFVAGMVGMAYAA). The Periplasmic portion of the chain corresponds to 36–199 (VPLYDMFCRV…VKDGETENRL (164 aa)).

This sequence belongs to the COX11/CtaG family.

Its subcellular location is the cell inner membrane. Exerts its effect at some terminal stage of cytochrome c oxidase synthesis, probably by being involved in the insertion of the copper B into subunit I. In Sinorhizobium fredii (strain NBRC 101917 / NGR234), this protein is Cytochrome c oxidase assembly protein CtaG.